A 1117-amino-acid chain; its full sequence is DNA polymerase II large subunit (1117 aa).

Positions Ser279–Lys294 are enriched in basic and acidic residues. The disordered stretch occupies residues Ser279–Ala299.

The protein belongs to the archaeal DNA polymerase II family. As to quaternary structure, heterodimer of a large subunit and a small subunit.

It catalyses the reaction DNA(n) + a 2'-deoxyribonucleoside 5'-triphosphate = DNA(n+1) + diphosphate. The catalysed reaction is Exonucleolytic cleavage in the 3'- to 5'-direction to yield nucleoside 5'-phosphates.. In terms of biological role, possesses two activities: a DNA synthesis (polymerase) and an exonucleolytic activity that degrades single-stranded DNA in the 3'- to 5'-direction. Has a template-primer preference which is characteristic of a replicative DNA polymerase. This chain is DNA polymerase II large subunit, found in Methanosphaera stadtmanae (strain ATCC 43021 / DSM 3091 / JCM 11832 / MCB-3).